The following is a 103-amino-acid chain: Pyrimidine/purine nucleoside phosphorylase (103 aa).

It belongs to the nucleoside phosphorylase PpnP family.

It carries out the reaction a purine D-ribonucleoside + phosphate = a purine nucleobase + alpha-D-ribose 1-phosphate. The enzyme catalyses adenosine + phosphate = alpha-D-ribose 1-phosphate + adenine. It catalyses the reaction cytidine + phosphate = cytosine + alpha-D-ribose 1-phosphate. The catalysed reaction is guanosine + phosphate = alpha-D-ribose 1-phosphate + guanine. It carries out the reaction inosine + phosphate = alpha-D-ribose 1-phosphate + hypoxanthine. The enzyme catalyses thymidine + phosphate = 2-deoxy-alpha-D-ribose 1-phosphate + thymine. It catalyses the reaction uridine + phosphate = alpha-D-ribose 1-phosphate + uracil. The catalysed reaction is xanthosine + phosphate = alpha-D-ribose 1-phosphate + xanthine. Functionally, catalyzes the phosphorolysis of diverse nucleosides, yielding D-ribose 1-phosphate and the respective free bases. Can use uridine, adenosine, guanosine, cytidine, thymidine, inosine and xanthosine as substrates. Also catalyzes the reverse reactions. This Shewanella baltica (strain OS223) protein is Pyrimidine/purine nucleoside phosphorylase.